We begin with the raw amino-acid sequence, 138 residues long: Putative pre-16S rRNA nuclease (138 aa).

It belongs to the YqgF nuclease family.

The protein resides in the cytoplasm. Could be a nuclease involved in processing of the 5'-end of pre-16S rRNA. The polypeptide is Putative pre-16S rRNA nuclease (Escherichia coli O45:K1 (strain S88 / ExPEC)).